The chain runs to 98 residues: Mitochondrial import inner membrane translocase subunit tim8 (98 aa).

The Twin CX3C motif motif lies at 44-67 (CWPKCIGNIGNKLDKSEEQCLQNC). Disulfide bonds link cysteine 44–cysteine 67 and cysteine 48–cysteine 63.

This sequence belongs to the small Tim family. As to quaternary structure, heterohexamer; composed of 3 copies of TIM8 and 3 copies of TIM13, named soluble 70 kDa complex. Associates with the TIM22 complex, whose core is composed of TIM22 and TIM54. Interacts with the transmembrane regions of multi-pass transmembrane proteins in transit.

It is found in the mitochondrion inner membrane. Functionally, mitochondrial intermembrane chaperone that participates in the import and insertion of some multi-pass transmembrane proteins into the mitochondrial inner membrane. Also required for the transfer of beta-barrel precursors from the TOM complex to the sorting and assembly machinery (SAM complex) of the outer membrane. Acts as a chaperone-like protein that protects the hydrophobic precursors from aggregation and guide them through the mitochondrial intermembrane space. The TIM8-TIM13 complex is non essential and only mediates the import of few proteins, while the predominant TIM9-TIM10 70 kDa complex is crucial and mediates the import of much more proteins. This chain is Mitochondrial import inner membrane translocase subunit tim8 (tim8), found in Schizosaccharomyces pombe (strain 972 / ATCC 24843) (Fission yeast).